Consider the following 561-residue polypeptide: Rho guanine nucleotide exchange factor 9 (561 aa).

The 60-residue stretch at 53-112 (DSIVSAEAVWDHVTMANRELAFKAGDVIKVLDASNKDWWWGQIDDEEGWFPASFVRLWVN) folds into the SH3 domain. Positions 145 to 155 (RDQMRANVINE) are interaction with GPHN. In terms of domain architecture, DH spans 148–332 (MRANVINEIM…RNVTQQINER (185 aa)). Positions 363 to 470 (ELIYTGEMAW…WLRAFREERK (108 aa)) constitute a PH domain. The tract at residues 499–524 (KQKGVNSARSVPPSYPPPQDPLNQGQ) is disordered. A Phosphoserine modification is found at Ser-547.

In terms of assembly, interacts with GPHN.

The protein localises to the cytoplasm. It is found in the postsynaptic density. Functionally, acts as a guanine nucleotide exchange factor (GEF) for CDC42. Promotes formation of GPHN clusters. The protein is Rho guanine nucleotide exchange factor 9 (ARHGEF9) of Bos taurus (Bovine).